A 984-amino-acid chain; its full sequence is Valine--tRNA ligase (984 aa).

The 'HIGH' region signature appears at 65–75 (PNVTGSLHMGH). Residues 579-583 (KMSKS) carry the 'KMSKS' region motif. An ATP-binding site is contributed by Lys-582. A coiled-coil region spans residues 954–984 (VEVVDAEKAKLAELEGQLTAMTAQMEELKNL).

This sequence belongs to the class-I aminoacyl-tRNA synthetase family. ValS type 1 subfamily. In terms of assembly, monomer.

It localises to the cytoplasm. The catalysed reaction is tRNA(Val) + L-valine + ATP = L-valyl-tRNA(Val) + AMP + diphosphate. Functionally, catalyzes the attachment of valine to tRNA(Val). As ValRS can inadvertently accommodate and process structurally similar amino acids such as threonine, to avoid such errors, it has a 'posttransfer' editing activity that hydrolyzes mischarged Thr-tRNA(Val) in a tRNA-dependent manner. The sequence is that of Valine--tRNA ligase from Psychrobacter arcticus (strain DSM 17307 / VKM B-2377 / 273-4).